Here is a 658-residue protein sequence, read N- to C-terminus: Sodium/potassium-transporting ATPase subunit beta-1-interacting protein (658 aa).

The next 4 membrane-spanning stretches (helical) occupy residues 1-22 (MGSC…QVIT), 31-51 (FLGY…FIIF), 64-84 (IITY…LICF), and 152-172 (VQCA…CIFL). Disordered stretches follow at residues 222-241 (HQQP…QQQP) and 248-337 (KNYQ…LSYA). Residues Asn-257, Asn-275, and Asn-279 are each glycosylated (N-linked (GlcNAc...) asparagine). Positions 274–308 (PNTTNNRSASFQTQSHPSNNHVTQRTGGEGSNCSS) are enriched in polar residues. Ser-291 carries the post-translational modification Phosphoserine. N-linked (GlcNAc...) asparagine glycosylation is present at Asn-305. At Ser-308 the chain carries Phosphoserine. A compositionally biased stretch (basic residues) spans 309–318 (LRRHRQHHSK). The segment covering 322–335 (SPSPMSPQTTPSLS) has biased composition (low complexity). Residues Asn-355 and Asn-396 are each glycosylated (N-linked (GlcNAc...) asparagine). Phosphoserine is present on residues Ser-398 and Ser-399. Residues Asn-417 and Asn-449 are each glycosylated (N-linked (GlcNAc...) asparagine). Disordered stretches follow at residues 571–601 (QVPL…FCDQ) and 621–658 (EQVE…GVQG).

Belongs to the NKAIN family. As to quaternary structure, interacts with nrv1. In terms of tissue distribution, expressed in the brain.

It localises to the cell membrane. Induces a small but significant sodium conductance when expressed in Xenopus oocytes. This is Sodium/potassium-transporting ATPase subunit beta-1-interacting protein (NKAIN) from Drosophila melanogaster (Fruit fly).